The chain runs to 624 residues: Serine/threonine-protein kinase ppk35 (624 aa).

The Protein kinase domain occupies 162–465; sequence FDLLVKLGQG…TIEIQKHPFF (304 aa). Residues 168–176 and Lys-191 each bind ATP; that span reads LGQGGYGSV. The active-site Proton acceptor is Asp-285. The AGC-kinase C-terminal domain occupies 466–548; it reads KRLHWNGLRK…KYRPNARKPL (83 aa). The span at 545–559 shows a compositional bias: basic residues; that stretch reads RKPLVGRHREKRQLR. The disordered stretch occupies residues 545–617; the sequence is RKPLVGRHRE…VHRLLERKGK (73 aa). Basic and acidic residues predominate over residues 560–574; the sequence is KEKPEKKNNSTKQKD. Positions 596–609 are enriched in basic residues; that stretch reads SKTKGHKTKSSRVH.

The protein belongs to the protein kinase superfamily. Ser/Thr protein kinase family.

It localises to the cytoplasm. The protein localises to the nucleus. The protein resides in the nucleolus. It carries out the reaction L-seryl-[protein] + ATP = O-phospho-L-seryl-[protein] + ADP + H(+). The catalysed reaction is L-threonyl-[protein] + ATP = O-phospho-L-threonyl-[protein] + ADP + H(+). Functionally, has a role in meiosis. The protein is Serine/threonine-protein kinase ppk35 (ppk35) of Schizosaccharomyces pombe (strain 972 / ATCC 24843) (Fission yeast).